The chain runs to 1031 residues: MAAWLVRMSAYAELHCLSNFSFQRGASSATELFARAARLGYRALAITDECSLAGIVRAWQAAREHQVQLIVGSEIRLEQGPKLVLLAEDLEGYQNLCRLITRGRRQADKGHYRLLREDLQQPLAGLLAIWLPNDHGDEQAAWLRERFPQRLWLGVELHRGADDDARLDKLLALASHLRLPPVACGDVHMHARGRRALQDCMTAIRNHLPVSEAGAYLFPNGERHLRTLEALQGIYPQALLAETLKIAERCRFDLEQLKYQYPRELVPAGHDPASWLRHLTEQGIARRWPNGASAKVRKQIERELELIAELGYESYFLTVQDIVAFARGRKILCQGRGSAANSAVCFALGITELDPDRTNLLFERFLSRERNEPPDIDVDFEHERREEVIQYVFTRYGRQRAALTAVVSTYHGAGAVRDVAKALGLPPEQVDVLANCCGRWSDQAPSAERLEEAGFDPQSPILRRVLALTDELIGFPRHLSQHPGGFVISEQPLDTLVPVENASMAERTVIQWDKDDLDAVGLLKVDVLALGMLSALRRSFDLIHALRGGKRLSIASIPSEDPATYEMISRADTIGVFQIESRAQMAMLPRLRPQKFYDLVIQVAIVRPGPIQGDMVHPYLRRRNGEEPVAYPSAELEEVFERTLGVPLFQEQVMELAIVAADYTPGEADELRRSMAAWKRHGGLEHHRERLTRGMLAKGYEADFAARIFEQIKGFGSYGFPESHAASFALLTYASSWLKRHEPAAFACALINSWPMGFYSPDQLLQDARRHALQTRPVDVRHSGWDCSLESFGQAQPAIRLGLRMIRGFREEDARRIEQVREAEPFLDVHDLGRRARLDARALELLADAGALRGLAGHRHKARWAVASVEPQLPLFAEGTAIEESTVSLPLPSRGEELLSDYALLGTTLGPHPLKLLRGQLKARRCRDSRELAKLGHGRPIRVAGLVVGRQRPQTASGITFITLEDEFGMVNVVVRHDLAERQRRPFLESRLLQVEGILESSGEVRHVIAGRLHDLTPLLTGLDVRSRDFH.

This sequence belongs to the DNA polymerase type-C family. DnaE2 subfamily.

The protein resides in the cytoplasm. It carries out the reaction DNA(n) + a 2'-deoxyribonucleoside 5'-triphosphate = DNA(n+1) + diphosphate. In terms of biological role, DNA polymerase involved in damage-induced mutagenesis and translesion synthesis (TLS). It is not the major replicative DNA polymerase. This Pseudomonas aeruginosa (strain ATCC 15692 / DSM 22644 / CIP 104116 / JCM 14847 / LMG 12228 / 1C / PRS 101 / PAO1) protein is Error-prone DNA polymerase.